A 1019-amino-acid polypeptide reads, in one-letter code: Outer capsid protein P3 (1019 aa).

This sequence belongs to the phytoreovirus inner capsid protein P3 family. As to quaternary structure, homodimer. Homomultimer.

It localises to the virion. It is found in the host cytoplasm. Its function is as follows. Capsid protein which self-assembles to form the inner icosahedral capsid with a T=2 symmetry, and consisting of 60 P3 dimers. The polypeptide is Outer capsid protein P3 (Alopecurus aequalis (Barnyard grass)).